The primary structure comprises 744 residues: FHF complex subunit HOOK-interacting protein 2B (744 aa).

2 disordered regions span residues 184–213 (KTARESTAPPKDIAGYRDKDCPHSDALNRD) and 510–530 (LDSGLQPSTKPPPAPATSSDG). The segment covering 197 to 213 (AGYRDKDCPHSDALNRD) has biased composition (basic and acidic residues).

Belongs to the FHIP family. As to expression, expressed in colon.

Functionally, able to activate MAPK/ERK and TGFB signaling pathways. May regulate the activity of genes involved in intestinal barrier function and immunoprotective inflammation. May play a role in cell proliferation. The sequence is that of FHF complex subunit HOOK-interacting protein 2B from Mus musculus (Mouse).